A 235-amino-acid chain; its full sequence is FsC-acetyl coenzyme A-N(2)-transacetylase (235 aa).

The N-acetyltransferase domain maps to L14–L190. Residues F106–V108, G114, N146, and A151–M153 each bind CoA.

It functions in the pathway siderophore biosynthesis. In terms of biological role, fsC-acetyl coenzyme A-N(2)-transacetylase; part of the siderophore biosynthetic pathway. Aspergillus fumigatus produces 4 types of siderophores, low-molecular-mass iron chelators, including excreted fusarinine C (FsC) and triacetylfusarinine C (TAFC) for iron uptake and intacellular ferricrocin (FC) for hyphal and hydroxyferricrocin (HFC) for conidial iron distribution and storage. TAFC consists of 3 N(2)-acetyl-N(5)-anhydromevalonyl-N(5)-hydroxyornithine residues cyclically linked by ester bonds; FC is a cyclic hexapeptide with the structure Gly-Ser-Gly-(N(5)-acetyl-N(5)-hydroxyornithine)x3. The biosynthesis of all four siderophores depends on the hydroxylation of ornithine, catalyzed by the monooxygenase sidA. Subsequently, the pathways for biosynthesis of extra- and intracellular siderophores split. For biosynthesis of extracellular siderophores, the transacylase sidF transfers anhydromevalonyl to N(5)-hydroxyornithine. The required anhydromevalonyl-CoA moiety is derived from mevalonate by CoA ligation and dehydration catalyzed by sidI and sidH respectively. The acetylation of N(5)-hydroxyornithine for FC biosynthesis involves the constitutively expressed sidL. FC is hydroxylated to HFC by an as yet uncharacterized enzyme during conidiation. Assembly of fusarinine C (FsC) and FC is catalyzed by two different nonribosomal peptide synthetases (NRPS), sidD and sidC respectively. Subsequently, sidG catalyzes N2-acetylation of FsC for forming TAFC. Both extra- and intracellular siderophores are crucial for growth during iron limitation and virulence. This is FsC-acetyl coenzyme A-N(2)-transacetylase from Aspergillus fumigatus (strain ATCC MYA-4609 / CBS 101355 / FGSC A1100 / Af293) (Neosartorya fumigata).